We begin with the raw amino-acid sequence, 412 residues long: Double C2-like domain-containing protein beta (412 aa).

The tract at residues 1 to 36 (MTLRRRGEKATISIQEHMAIDVCPGPIRPIKQISDY) is negatively regulates targeting to plasma membrane. Positions 1–90 (MTLRRRGEKA…EDVDQLFGAY (90 aa)) are mediates interaction with DYNLT1. The segment at 38-123 (PRFPRGLPPT…PDVDGYESDD (86 aa)) is disordered. Residues 43 to 58 (GLPPTAAPRAPAPPDA) show a composition bias toward pro residues. Positions 59–74 (PARSPAASASPRSPSD) are enriched in low complexity. Residues 95-108 (GPSPGPSPARPPAK) show a composition bias toward pro residues. Residues 112–123 (DEPDVDGYESDD) are compositionally biased toward acidic residues. 2 C2 domains span residues 126–250 (ALGT…SICL) and 266–399 (ERGR…ERWH). Residues Asp157, Asp163, Asp218, Asp220, Asp297, Asp303, Asp357, Asp359, and Asp365 each coordinate Ca(2+). The tract at residues 257 to 375 (DKAEDKSLEE…FIGGVVLGIN (119 aa)) is mediates interaction with STXBP3. Residue Ser411 is modified to Phosphoserine.

Interacts with cytoplasmic dynein light chain DYNLT1. May interact with UNC13A; the interaction mediates targeting to the plasma membrane. Probably interacts with the SNARE (soluble N-ethylmaleimide-sensitive factor attached protein receptor) complex composed of SNAP25, STX1A and VAMP2; the interaction is calcium-dependent and competitive with SYT1. Interacts with STX4; the interaction is calcium-dependent, increased by insulin and glucose, and mediates vesicle fusion with plasma membrane in pancreatic cells and adipocytes. Interacts with STXBP3; the interaction is direct, occurs at the cell membrane and regulates glucose-stimulated insulin secretion. Requires Ca(2+) as cofactor. As to expression, widely expressed. Expressed in pancreatic islet cells (at protein level).

The protein localises to the cytoplasm. The protein resides in the cytoplasmic granule. It localises to the cell membrane. Its function is as follows. Calcium sensor which positively regulates SNARE-dependent fusion of vesicles with membranes. Binds phospholipids in a calcium-dependent manner and may act at the priming stage of fusion by modifying membrane curvature to stimulate fusion. Involved in calcium-triggered exocytosis in chromaffin cells and calcium-dependent spontaneous release of neurotransmitter in absence of action potentials in neuronal cells. Involved both in glucose-stimulated insulin secretion in pancreatic cells and insulin-dependent GLUT4 transport to the plasma membrane in adipocytes. The chain is Double C2-like domain-containing protein beta (Doc2b) from Mus musculus (Mouse).